A 313-amino-acid polypeptide reads, in one-letter code: uncharacterized protein (313 aa).

This sequence to B.subtilis YqxC and T.hyodysenteriae hemolysin TlyA.

This is an uncharacterized protein from Bacillus subtilis (strain 168).